The chain runs to 430 residues: Enolase (430 aa).

Gln-163 is a binding site for (2R)-2-phosphoglycerate. The active-site Proton donor is Glu-205. Mg(2+)-binding residues include Asp-242, Glu-288, and Asp-315. The (2R)-2-phosphoglycerate site is built by Lys-340, Arg-369, Ser-370, and Lys-391. Lys-340 (proton acceptor) is an active-site residue.

This sequence belongs to the enolase family. Requires Mg(2+) as cofactor.

It localises to the cytoplasm. Its subcellular location is the secreted. The protein localises to the cell surface. The enzyme catalyses (2R)-2-phosphoglycerate = phosphoenolpyruvate + H2O. The protein operates within carbohydrate degradation; glycolysis; pyruvate from D-glyceraldehyde 3-phosphate: step 4/5. Catalyzes the reversible conversion of 2-phosphoglycerate (2-PG) into phosphoenolpyruvate (PEP). It is essential for the degradation of carbohydrates via glycolysis. The sequence is that of Enolase from Acidobacterium capsulatum (strain ATCC 51196 / DSM 11244 / BCRC 80197 / JCM 7670 / NBRC 15755 / NCIMB 13165 / 161).